A 368-amino-acid chain; its full sequence is tRNA-specific 2-thiouridylase MnmA (368 aa).

Residues G11–S18 and M37 contribute to the ATP site. The tract at residues N97–D99 is interaction with target base in tRNA. Catalysis depends on C102, which acts as the Nucleophile. C102 and C199 are joined by a disulfide. ATP is bound at residue G127. Residues K149 to Q151 form an interaction with tRNA region. C199 (cysteine persulfide intermediate) is an active-site residue. The segment at R311–Y312 is interaction with tRNA.

It belongs to the MnmA/TRMU family. As to quaternary structure, interacts with TusE.

It is found in the cytoplasm. It carries out the reaction S-sulfanyl-L-cysteinyl-[protein] + uridine(34) in tRNA + AH2 + ATP = 2-thiouridine(34) in tRNA + L-cysteinyl-[protein] + A + AMP + diphosphate + H(+). Its function is as follows. Catalyzes the 2-thiolation of uridine at the wobble position (U34) of tRNA(Lys), tRNA(Glu) and tRNA(Gln), leading to the formation of s(2)U34, the first step of tRNA-mnm(5)s(2)U34 synthesis. Sulfur is provided by IscS, via a sulfur-relay system. Binds ATP and its substrate tRNAs. This is tRNA-specific 2-thiouridylase MnmA from Salmonella arizonae (strain ATCC BAA-731 / CDC346-86 / RSK2980).